A 144-amino-acid polypeptide reads, in one-letter code: Large ribosomal subunit protein uL22 (144 aa).

Residues 123–144 (ELVKKRTMGHKKEKAKQKQKQQ) form a disordered region. A compositionally biased stretch (basic residues) spans 125–144 (VKKRTMGHKKEKAKQKQKQQ).

It belongs to the universal ribosomal protein uL22 family. Part of the 50S ribosomal subunit.

Functionally, this protein binds specifically to 23S rRNA; its binding is stimulated by other ribosomal proteins, e.g. L4, L17, and L20. It is important during the early stages of 50S assembly. It makes multiple contacts with different domains of the 23S rRNA in the assembled 50S subunit and ribosome. Its function is as follows. The globular domain of the protein is located near the polypeptide exit tunnel on the outside of the subunit, while an extended beta-hairpin is found that lines the wall of the exit tunnel in the center of the 70S ribosome. The protein is Large ribosomal subunit protein uL22 of Mycoplasma genitalium (strain ATCC 33530 / DSM 19775 / NCTC 10195 / G37) (Mycoplasmoides genitalium).